Here is a 3010-residue protein sequence, read N- to C-terminus: Probable polyketide synthase 2 (3010 aa).

Positions 9 to 432 constitute a Ketosynthase family 3 (KS3) domain; it reads SRDVAVIGIG…GSNACLLLSE (424 aa). Active-site for beta-ketoacyl synthase activity residues include cysteine 174, histidine 313, and histidine 353. Residues 629–662 form an acyl/malonyl transferase region; the sequence is GINPSINVGHSFGEISSACCSGMLDLETACFIVY. The For acyl/malonyl transferase activity role is filled by serine 639. Residues 944–1063 are N-terminal hotdog fold; sequence ATQLGYRNDV…ARFSVLKHNS (120 aa). The PKS/mFAS DH domain maps to 944-1235; the sequence is ATQLGYRNDV…YSSISTDIKN (292 aa). Histidine 976 serves as the catalytic Proton acceptor; for dehydratase activity. The tract at residues 1080-1235 is C-terminal hotdog fold; sequence NWTTIKRKEF…YSSISTDIKN (156 aa). The active-site Proton donor; for dehydratase activity is the aspartate 1146. In terms of domain architecture, Carrier spans 2482–2559; that stretch reads DNELSIRDDI…QLIQAVIQAV (78 aa). Serine 2519 is subject to O-(pantetheine 4'-phosphoryl)serine.

Pantetheine 4'-phosphate serves as cofactor.

In terms of biological role, probable polyketide synthase. In Dictyostelium discoideum (Social amoeba), this protein is Probable polyketide synthase 2 (pks2).